The chain runs to 228 residues: Phosphoenolpyruvate guanylyltransferase (228 aa).

Residues T148, G164, and S167 each contribute to the phosphoenolpyruvate site.

Belongs to the CofC family.

It catalyses the reaction phosphoenolpyruvate + GTP + H(+) = enolpyruvoyl-2-diphospho-5'-guanosine + diphosphate. Its pathway is cofactor biosynthesis; coenzyme F420 biosynthesis. Guanylyltransferase that catalyzes the activation of phosphoenolpyruvate (PEP) as enolpyruvoyl-2-diphospho-5'-guanosine, via the condensation of PEP with GTP. It is involved in the biosynthesis of coenzyme F420, a hydride carrier cofactor. This Thermomonospora curvata (strain ATCC 19995 / DSM 43183 / JCM 3096 / KCTC 9072 / NBRC 15933 / NCIMB 10081 / Henssen B9) protein is Phosphoenolpyruvate guanylyltransferase.